A 195-amino-acid polypeptide reads, in one-letter code: Large ribosomal subunit protein uL18 (195 aa).

This sequence belongs to the universal ribosomal protein uL18 family. Part of the 50S ribosomal subunit. Contacts the 5S and 23S rRNAs.

Its function is as follows. This is one of the proteins that bind and probably mediate the attachment of the 5S RNA into the large ribosomal subunit, where it forms part of the central protuberance. In Methanococcus vannielii, this protein is Large ribosomal subunit protein uL18.